Consider the following 63-residue polypeptide: Small ribosomal subunit protein eS30B (63 aa).

Positions Met-1–Tyr-35 are disordered. Ser-16 bears the Phosphoserine mark. Residue Thr-48 is modified to Phosphothreonine.

Belongs to the eukaryotic ribosomal protein eS30 family. In terms of assembly, component of the small ribosomal subunit (SSU). Mature yeast ribosomes consist of a small (40S) and a large (60S) subunit. The 40S small subunit contains 1 molecule of ribosomal RNA (18S rRNA) and 33 different proteins (encoded by 57 genes). The large 60S subunit contains 3 rRNA molecules (25S, 5.8S and 5S rRNA) and 46 different proteins (encoded by 81 genes).

It localises to the cytoplasm. In terms of biological role, component of the ribosome, a large ribonucleoprotein complex responsible for the synthesis of proteins in the cell. The small ribosomal subunit (SSU) binds messenger RNAs (mRNAs) and translates the encoded message by selecting cognate aminoacyl-transfer RNA (tRNA) molecules. The large subunit (LSU) contains the ribosomal catalytic site termed the peptidyl transferase center (PTC), which catalyzes the formation of peptide bonds, thereby polymerizing the amino acids delivered by tRNAs into a polypeptide chain. The nascent polypeptides leave the ribosome through a tunnel in the LSU and interact with protein factors that function in enzymatic processing, targeting, and the membrane insertion of nascent chains at the exit of the ribosomal tunnel. This chain is Small ribosomal subunit protein eS30B, found in Saccharomyces cerevisiae (strain ATCC 204508 / S288c) (Baker's yeast).